Reading from the N-terminus, the 424-residue chain is MFS-type transporter opdF (424 aa).

Basic and acidic residues predominate over residues 1 to 10 (MSDTSLEKGN). Residues 1–23 (MSDTSLEKGNEGPTAEAPKVAPP) are disordered. 5 helical membrane passes run 36–56 (VAGA…IALF), 102–122 (VPIA…SLST), 127–147 (LMLS…TPAM), 160–180 (IVGG…PLMV), and 187–207 (VGFG…LVFA). A glycan (N-linked (GlcNAc...) asparagine) is linked at Asn208. A run of 6 helical transmembrane segments spans residues 239-259 (LCVA…YIVV), 265-285 (GMST…SFFG), 299-319 (FNVM…LWLP), 329-349 (FAAL…VLIV), 364-384 (VLAF…AIAA), and 391-411 (TYTC…LAAL).

The protein belongs to the major facilitator superfamily. Monocarboxylate porter (TC 2.A.1.13) family.

It localises to the membrane. Functionally, MFS-type transporter; part of the gene cluster that mediates the biosynthesis of oxopyrrolidines, polyketide-amino acid hybrid compounds with feature structures of tetramic acid. This is MFS-type transporter opdF from Penicillium oxalicum (strain 114-2 / CGMCC 5302) (Penicillium decumbens).